The sequence spans 918 residues: Cap-specific mRNA (nucleoside-2'-O-)-methyltransferase 1 (918 aa).

The span at 1–18 (MADRKSDEGEDEYQHKEQ) shows a compositional bias: basic and acidic residues. 2 disordered regions span residues 1–56 (MADR…EERA) and 62–81 (KRGY…EEEP). Residues 19 to 30 (MVTNRTSSFQPK) are compositionally biased toward polar residues. The segment covering 43-56 (RAADRREEFMEERA) has biased composition (basic and acidic residues). The span at 68-80 (GDDEEDDFTAEEE) shows a compositional bias: acidic residues. A G-patch domain is found at 86–132 (PLTVAERLMAAMGHKAGEGLGKHGQGISEPIASSTQRGRTGLGHNAG). The 230-residue stretch at 236 to 465 (FFQNRAAMKT…ERYITCKGLR (230 aa)) folds into the RrmJ-type SAM-dependent 2'-O-MTase domain. S-adenosyl-L-methionine-binding residues include Gly298 and Asp379. Residue Lys419 is the Proton acceptor of the active site.

The enzyme catalyses a 5'-end (N(7)-methyl 5'-triphosphoguanosine)-ribonucleoside in mRNA + S-adenosyl-L-methionine = a 5'-end (N(7)-methyl 5'-triphosphoguanosine)-(2'-O-methyl-ribonucleoside) in mRNA + S-adenosyl-L-homocysteine + H(+). In terms of biological role, S-adenosyl-L-methionine-dependent methyltransferase that mediates mRNA cap1 2'-O-ribose methylation to the 5'-cap structure of mRNAs. Methylates the ribose of the first nucleotide of a m(7)GpppG-capped mRNA to produce m(7)GpppNmp (cap1). Cap1 modification is linked to higher levels of translation. This chain is Cap-specific mRNA (nucleoside-2'-O-)-methyltransferase 1, found in Caenorhabditis elegans.